A 520-amino-acid chain; its full sequence is L-tyrosine:2-oxoglutarate aminotransferase amt1 (520 aa).

Belongs to the class-I pyridoxal-phosphate-dependent aminotransferase family. Pyridoxal 5'-phosphate serves as cofactor.

It carries out the reaction L-tyrosine + 2-oxoglutarate = 3-(4-hydroxyphenyl)pyruvate + L-glutamate. The protein operates within secondary metabolite biosynthesis. Functionally, an L-tyrosine:2-oxoglutarate aminotransferase (probably amt1) and atromentin synthetase nps3 catalyze consecutive steps to turn over L-tyrosine into atromentin, which represents the generic precursor molecule for the entire terphenylquinone and pulvinic acid family of pigments, which are widely distributed secondary metabolites in homobasidiomycetes. The first step catalyzed by amt1 converts L-tyrosine in to 4-hydroxyphenylpyruvate (4-HPP). Adenylation of two 4-HPP monomers by the nps3 adenylation (A) domain, covalent tethering of the monomers as a thioester and oxoester onto the nps3 thiolation (T) and thioesterase (TE) domains, respectively, and symmetric C-C-bond formation between two monomers catalyzed by the nps3 TE domain leads to atromentin. Follow-up products of atromentin in S.lacrymans include atromentic acid, xerocomic acid, isoxerocomic acid and variegatic acid. The sequence is that of L-tyrosine:2-oxoglutarate aminotransferase amt1 (amt1) from Serpula lacrymans var. lacrymans (strain S7.9) (Dry rot fungus).